Here is an 86-residue protein sequence, read N- to C-terminus: Anti-adapter protein IraP (86 aa).

Residues 1–38 (MKNLIAELLVKLAQKEEEAKELTVQVEALEIVVTALLR) are a coiled coil.

It belongs to the IraP family. In terms of assembly, interacts with RssB.

Its subcellular location is the cytoplasm. In terms of biological role, inhibits RpoS proteolysis by regulating RssB activity, thereby increasing the stability of the sigma stress factor RpoS especially during phosphate starvation, but also in stationary phase and during nitrogen starvation. Its effect on RpoS stability is due to its interaction with RssB, which probably blocks the interaction of RssB with RpoS, and the consequent delivery of the RssB-RpoS complex to the ClpXP protein degradation pathway. This chain is Anti-adapter protein IraP, found in Klebsiella pneumoniae (strain 342).